Consider the following 358-residue polypeptide: D-alanine--D-alanine ligase B (358 aa).

Residues 147 to 352 (KYVLENFKFK…YSALIDELIE (206 aa)) form the ATP-grasp domain. ATP is bound at residue 179–234 (VEKLQYDVFIKPANSGSSVGITKAHNKEELLKGLEEAFIHDKNVLVEEAINAREIE). Mg(2+) is bound by residues D305, E319, and N321.

It belongs to the D-alanine--D-alanine ligase family. Mg(2+) serves as cofactor. The cofactor is Mn(2+).

Its subcellular location is the cytoplasm. The enzyme catalyses 2 D-alanine + ATP = D-alanyl-D-alanine + ADP + phosphate + H(+). It participates in cell wall biogenesis; peptidoglycan biosynthesis. Functionally, cell wall formation. This chain is D-alanine--D-alanine ligase B, found in Clostridium tetani (strain Massachusetts / E88).